Here is a 180-residue protein sequence, read N- to C-terminus: Hypoxanthine-guanine phosphoribosyltransferase (180 aa).

2 residues coordinate diphosphate: K43 and G44. Positions 99 and 100 each coordinate Mg(2+). Catalysis depends on D103, which acts as the Proton acceptor. GMP contacts are provided by residues K131, 152 to 153 (FI), and D159. Diphosphate is bound at residue R165.

This sequence belongs to the purine/pyrimidine phosphoribosyltransferase family. Mg(2+) serves as cofactor.

The protein resides in the cytoplasm. The catalysed reaction is IMP + diphosphate = hypoxanthine + 5-phospho-alpha-D-ribose 1-diphosphate. It catalyses the reaction GMP + diphosphate = guanine + 5-phospho-alpha-D-ribose 1-diphosphate. It participates in purine metabolism; IMP biosynthesis via salvage pathway; IMP from hypoxanthine: step 1/1. Its pathway is purine metabolism; GMP biosynthesis via salvage pathway; GMP from guanine: step 1/1. Purine salvage pathway enzyme that catalyzes the transfer of the ribosyl-5-phosphate group from 5-phospho-alpha-D-ribose 1-diphosphate (PRPP) to the N9 position of the 6-oxopurines hypoxanthine and guanine to form the corresponding ribonucleotides IMP (inosine 5'-monophosphate) and GMP (guanosine 5'-monophosphate), with the release of PPi. In Streptococcus mutans serotype c (strain ATCC 700610 / UA159), this protein is Hypoxanthine-guanine phosphoribosyltransferase (hpt).